Consider the following 712-residue polypeptide: Anaerobic ribonucleoside-triphosphate reductase (712 aa).

The ATP-cone domain occupies P3–R92. The Glycine radical domain occupies K583–N708. Positions 644, 647, 662, and 665 each coordinate Zn(2+). G681 carries the post-translational modification Glycine radical.

This sequence belongs to the anaerobic ribonucleoside-triphosphate reductase family. Homodimer. Forms a tetramer composed of two NrdD and two NrdG subunits.

The enzyme catalyses a ribonucleoside 5'-triphosphate + formate + H(+) = a 2'-deoxyribonucleoside 5'-triphosphate + CO2 + H2O. The catalysed reaction is formate + ATP + H(+) = dATP + CO2 + H2O. It catalyses the reaction CTP + formate + H(+) = dCTP + CO2 + H2O. It carries out the reaction GTP + formate + H(+) = dGTP + CO2 + H2O. The enzyme catalyses UTP + formate + H(+) = dUTP + CO2 + H2O. With respect to regulation, activated under anaerobic conditions by NrdG, a tightly associated activase. Activation involves the formation of a glycyl radical at Gly-681. Exposure of the activated reductase to oxygen leads to C-terminal truncation and inactivation of the protein, by cleavage at the N-terminal side of Gly-681. The presence of zinc protects the protein from proteolysis and prevents the formation of disulfide bridges within it. The enzyme shows a basal activity in the absence of any effector, but reduction is stimulated up to 10-fold by an appropriate modulator (dGTP for ATP reduction, ATP for CTP and UTP reduction, and dTTP for GTP reduction). dGTP and dTTP inhibit the reduction of the incorrect substrate, and dATP inhibits reduction of all four. These modulators act as allosteric effectors. Catalyzes the conversion of ribonucleotides into deoxyribonucleotides, which are required for DNA synthesis and repair. Can reduce each of the four common ribonucleoside triphosphates. The sequence is that of Anaerobic ribonucleoside-triphosphate reductase from Escherichia coli (strain K12).